Reading from the N-terminus, the 276-residue chain is Mitochondrial outer membrane protein porin 6 (276 aa).

It belongs to the eukaryotic mitochondrial porin (TC 1.B.8.1) family.

The protein localises to the mitochondrion outer membrane. Functionally, forms a channel through the mitochondrial outer membrane that allows diffusion of small hydrophilic molecules. The channel adopts an open conformation at low or zero membrane potential and a closed conformation at potentials above 30-40 mV. The open state has a weak anion selectivity whereas the closed state is cation-selective. The sequence is that of Mitochondrial outer membrane protein porin 6 (VDAC6) from Oryza sativa subsp. japonica (Rice).